A 191-amino-acid chain; its full sequence is Nascent polypeptide-associated complex subunit alpha (191 aa).

The region spanning 24 to 89 is the NAC-A/B domain; that stretch reads SRPERKARKA…AKVEDPNSAA (66 aa). Residues 126 to 149 form a disordered region; it reads QDAPSADSSAPAPSGEATDASASG. Residues 127 to 139 are compositionally biased toward low complexity; sequence DAPSADSSAPAPS. The 39-residue stretch at 153–191 folds into the UBA domain; it reads VSDEEIQLIVAQTGVDEAKAREAYISEKGDLINAIMKLQ.

Belongs to the NAC-alpha family. In terms of assembly, part of the nascent polypeptide-associated complex (NAC), consisting of EGD2 and EGD1. NAC associates with ribosomes via EGD1.

It is found in the cytoplasm. Its subcellular location is the nucleus. Component of the nascent polypeptide-associated complex (NAC), a dynamic component of the ribosomal exit tunnel, protecting the emerging polypeptides from interaction with other cytoplasmic proteins to ensure appropriate nascent protein targeting. The NAC complex also promotes mitochondrial protein import by enhancing productive ribosome interactions with the outer mitochondrial membrane and blocks the inappropriate interaction of ribosomes translating non-secretory nascent polypeptides with translocation sites in the membrane of the endoplasmic reticulum. EGD2 may also be involved in transcription regulation. The sequence is that of Nascent polypeptide-associated complex subunit alpha (EGD2) from Cryptococcus neoformans var. neoformans serotype D (strain B-3501A) (Filobasidiella neoformans).